The primary structure comprises 294 residues: MMIHPQYDPVALALGPIEIHWYGLMYLLAFATAYGLAWYRSSKRDNWTTDMVSDLVFYGALGVILGGRIGYVLFYQFGELVQNPAYLLKVWEGGMSFHGGFIGVMLGMWFFARKYKKTAFQVFDFIVPCVPTGLLFGRIGNYINGELWGRVSDGGYNWLTYFPQAAAFDMEQLQSNPQLQELIIEVNGQYVLPRHPSQLYEAFAEGLLLFIFLWWYSSKPRPRMAASAVFLLGYGISRFIIEFFRQPDVDQGFILLGWMTKGQLLSAPMIIAGLIMLIYAYKRGIYDWGKQAAY.

Helical transmembrane passes span 10-30 (VALALGPIEIHWYGLMYLLAF), 55-75 (LVFYGALGVILGGRIGYVLFY), 91-111 (WEGGMSFHGGFIGVMLGMWFF), 119-139 (AFQVFDFIVPCVPTGLLFGRI), 196-216 (PSQLYEAFAEGLLLFIFLWWY), 224-244 (MAASAVFLLGYGISRFIIEFF), and 258-278 (WMTKGQLLSAPMIIAGLIMLI). An a 1,2-diacyl-sn-glycero-3-phospho-(1'-sn-glycerol)-binding site is contributed by Arg138.

This sequence belongs to the Lgt family.

It is found in the cell inner membrane. It carries out the reaction L-cysteinyl-[prolipoprotein] + a 1,2-diacyl-sn-glycero-3-phospho-(1'-sn-glycerol) = an S-1,2-diacyl-sn-glyceryl-L-cysteinyl-[prolipoprotein] + sn-glycerol 1-phosphate + H(+). Its pathway is protein modification; lipoprotein biosynthesis (diacylglyceryl transfer). Its function is as follows. Catalyzes the transfer of the diacylglyceryl group from phosphatidylglycerol to the sulfhydryl group of the N-terminal cysteine of a prolipoprotein, the first step in the formation of mature lipoproteins. The protein is Phosphatidylglycerol--prolipoprotein diacylglyceryl transferase of Psychrobacter arcticus (strain DSM 17307 / VKM B-2377 / 273-4).